The sequence spans 182 residues: Crossover junction endodeoxyribonuclease RuvC (182 aa).

Active-site residues include Asp-7, Glu-67, and Asp-139. 3 residues coordinate Mg(2+): Asp-7, Glu-67, and Asp-139.

This sequence belongs to the RuvC family. Homodimer which binds Holliday junction (HJ) DNA. The HJ becomes 2-fold symmetrical on binding to RuvC with unstacked arms; it has a different conformation from HJ DNA in complex with RuvA. In the full resolvosome a probable DNA-RuvA(4)-RuvB(12)-RuvC(2) complex forms which resolves the HJ. Mg(2+) is required as a cofactor.

It is found in the cytoplasm. The enzyme catalyses Endonucleolytic cleavage at a junction such as a reciprocal single-stranded crossover between two homologous DNA duplexes (Holliday junction).. Its function is as follows. The RuvA-RuvB-RuvC complex processes Holliday junction (HJ) DNA during genetic recombination and DNA repair. Endonuclease that resolves HJ intermediates. Cleaves cruciform DNA by making single-stranded nicks across the HJ at symmetrical positions within the homologous arms, yielding a 5'-phosphate and a 3'-hydroxyl group; requires a central core of homology in the junction. The consensus cleavage sequence is 5'-(A/T)TT(C/G)-3'. Cleavage occurs on the 3'-side of the TT dinucleotide at the point of strand exchange. HJ branch migration catalyzed by RuvA-RuvB allows RuvC to scan DNA until it finds its consensus sequence, where it cleaves and resolves the cruciform DNA. This chain is Crossover junction endodeoxyribonuclease RuvC, found in Bordetella pertussis (strain Tohama I / ATCC BAA-589 / NCTC 13251).